Reading from the N-terminus, the 297-residue chain is Homoserine kinase (297 aa).

79–89 (PIARGLGSSGA) contacts ATP.

This sequence belongs to the GHMP kinase family. Homoserine kinase subfamily.

It is found in the cytoplasm. The catalysed reaction is L-homoserine + ATP = O-phospho-L-homoserine + ADP + H(+). The protein operates within amino-acid biosynthesis; L-threonine biosynthesis; L-threonine from L-aspartate: step 4/5. In terms of biological role, catalyzes the ATP-dependent phosphorylation of L-homoserine to L-homoserine phosphate. This Pyrobaculum neutrophilum (strain DSM 2338 / JCM 9278 / NBRC 100436 / V24Sta) (Thermoproteus neutrophilus) protein is Homoserine kinase.